A 547-amino-acid chain; its full sequence is Immunoglobulin epsilon heavy chain (547 aa).

Pyrrolidone carboxylic acid is present on Gln1. Ig-like domains are found at residues 1–120, 130–223, 232–329, 333–437, and 443–542; these read QVQL…TEVT, PSVF…KTFS, PTVK…KKCA, PRGV…TKTS, and PEVY…RAVS. Residues 1–124 form a variable (V) domain, involved in antigen recognition region; it reads QVQLVQSGAE…EGTEVTYTVS (124 aa). 6 cysteine pairs are disulfide-bonded: Cys22–Cys96, Cys139–Cys225, Cys153–Cys207, Cys254–Cys312, Cys358–Cys418, and Cys464–Cys524. A constant (C) domain region spans residues 125 to 547; it reads GAWTLPSVFP…QRAVSVNPGK (423 aa). 7 N-linked (GlcNAc...) asparagine glycosylation sites follow: Asn145, Asn173, Asn219, Asn265, Asn371, Asn383, and Asn394.

Immunoglobulins are composed of two identical heavy chains and two identical light chains; disulfide-linked.

The protein localises to the secreted. Its subcellular location is the cell membrane. Its function is as follows. Immunoglobulins, also known as antibodies, are membrane-bound or secreted glycoproteins produced by B lymphocytes. In the recognition phase of humoral immunity, the membrane-bound immunoglobulins serve as receptors which, upon binding of a specific antigen, trigger the clonal expansion and differentiation of B lymphocytes into immunoglobulins-secreting plasma cells. Secreted immunoglobulins mediate the effector phase of humoral immunity, which results in the elimination of bound antigens. The antigen binding site is formed by the variable domain of one heavy chain, together with that of its associated light chain. Thus, each immunoglobulin has two antigen binding sites with remarkable affinity for a particular antigen. The variable domains are assembled by a process called V-(D)-J rearrangement and can then be subjected to somatic hypermutations which, after exposure to antigen and selection, allow affinity maturation for a particular antigen. This chain is Immunoglobulin epsilon heavy chain, found in Homo sapiens (Human).